A 486-amino-acid chain; its full sequence is Hematopoietic lineage cell-specific protein (486 aa).

Residues Phe27–Asp66 are involved in HAX-1 binding. Lys41 carries the N6-acetyllysine modification. Cortactin repeat units follow at residues Ala79–Asp115, Ala116–Asp152, and Tyr153–Asp189. Lys123 is modified (N6-acetyllysine). Position 140 is a phosphotyrosine (Tyr140). The Cortactin 4; truncated repeat unit spans residues Tyr190–Phe212. Residue Lys192 is modified to N6-acetyllysine. Tyr198 is modified (phosphotyrosine). Tyr222 is subject to Phosphotyrosine; by FGR. Residues Thr226–Ala430 form a disordered region. Basic and acidic residues-rich tracts occupy residues Ala240–Ala258 and Gln265–Arg276. Lys241 is subject to N6-acetyllysine. Ser275 is subject to Phosphoserine. Phosphothreonine is present on Thr330. Ser333 bears the Phosphoserine mark. Low complexity predominate over residues Val358–Ala367. Acidic residues predominate over residues Pro368–Asp413. Phosphotyrosine; by SYK and FES is present on residues Tyr388 and Tyr405. Residues Gly429–Leu486 form the SH3 domain.

In terms of assembly, interacts (via SH2 domain) with FGR. Associates with the SH2 and SH3 domains of LCK. Binding to he LCK SH3 domain occurs constitutively, while binding to the LCK SH2 domain occurs only upon TCR stimulation. A similar binding pattern was observed with LYN, but not with FYN in which the FYN SH2 region associates upon TCR stimulation but the FYN SH3 region does not associate regardless of TCR stimulation. Directly associates with HAX1, through binding to its C-terminal region. Interacts with HS1BP3. Interacts with FES/FPS. Forms a multiprotein complex with LYN and ANKRD54. Post-translationally, phosphorylated by LYN, FYN and FGR after cross-linking of surface IgM on B-cells. Phosphorylation by LYN, FYN and FGR requires prior phosphorylation by SYK. Binds to LCK in vivo, and is tyrosine phosphorylated upon TCR stimulation. Phosphorylated by FES. In terms of tissue distribution, expressed only in tissues and cells of hematopoietic origin.

Its subcellular location is the mitochondrion. In terms of biological role, substrate of the antigen receptor-coupled tyrosine kinase. Plays a role in antigen receptor signaling for both clonal expansion and deletion in lymphoid cells. May also be involved in the regulation of gene expression. This is Hematopoietic lineage cell-specific protein (Hcls1) from Mus musculus (Mouse).